Consider the following 897-residue polypeptide: Probable bifunctional chitinase/lysozyme (897 aa).

Residues 1 to 24 form the signal peptide; sequence MKLNIFTKSMIGMGLVCSALPALA. A Chitin-binding type-3 1 domain is found at 25 to 91; that stretch reads MEAWNNQQGG…SQFGNTLSCE (67 aa). Disordered regions lie at residues 90–127, 182–222, and 287–333; these read CEKS…SNSS, TEIS…PADK, and QYGN…DSVN. Residues 95–111 show a composition bias toward low complexity; the sequence is SSSSSNSNTPASNTPAN. Composition is skewed to polar residues over residues 113–127 and 182–197; these read GSAT…SNSS and TEIS…TSAP. Positions 128–194 constitute a Chitin-binding type-3 2 domain; sequence VVAWNKQQGG…SETSNPQSCT (67 aa). Residues 198 to 216 are compositionally biased toward pro residues; it reads QPSPDVKPAPDVKPAPDVQ. Residues 229–295 enclose the Chitin-binding type-3 3 domain; that stretch reads VVAWKGQEGS…SQYGNPGSCS (67 aa). Residues 309–318 are compositionally biased toward pro residues; the sequence is DPTPETPVTP. Over residues 322–333 the composition is skewed to polar residues; sequence NSEPSTPADSVN. Chitin-binding type-3 domains lie at 337–403 and 459–529; these read LQAW…TTCE and AKAW…PQFN. Residues 586–877 form the GH18 domain; the sequence is KHVYAPYVDF…TNLSPEFHGL (292 aa). A disulfide bond links cysteine 628 and cysteine 673. Glutamate 700 (proton donor) is an active-site residue.

Belongs to the glycosyl hydrolase 18 family. Chitinase class II subfamily.

It localises to the periplasm. The enzyme catalyses Random endo-hydrolysis of N-acetyl-beta-D-glucosaminide (1-&gt;4)-beta-linkages in chitin and chitodextrins.. The catalysed reaction is Hydrolysis of (1-&gt;4)-beta-linkages between N-acetylmuramic acid and N-acetyl-D-glucosamine residues in a peptidoglycan and between N-acetyl-D-glucosamine residues in chitodextrins.. Its function is as follows. Bifunctional enzyme with lysozyme/chitinase activity. This Escherichia coli (strain K12) protein is Probable bifunctional chitinase/lysozyme (chiA).